We begin with the raw amino-acid sequence, 802 residues long: Serine/threonine-protein kinase zyg-8 (802 aa).

Residues 1 to 13 (MPQTSAWQLNDTT) show a composition bias toward polar residues. A disordered region spans residues 1-102 (MPQTSAWQLN…SAPSTSSAHR (102 aa)). The segment covering 15 to 24 (RPPPPPPPPG) has biased composition (pro residues). The span at 89-99 (SPSSSAPSTSS) shows a compositional bias: low complexity. Doublecortin domains lie at 211 to 298 (KRLR…VDYS) and 340 to 423 (RIIK…ADDL). The interval 430–470 (HKSVGSGTSSNMRRTSRRSTMPNRNESLRHDRSGSVIPDQD) is disordered. The span at 434 to 454 (GSGTSSNMRRTSRRSTMPNRN) shows a compositional bias: low complexity. A Protein kinase domain is found at 482–743 (FQLVRLIGDG…AGELLNDEWM (262 aa)). ATP is bound by residues 488 to 496 (IGDGNTAVV) and Lys512. Asp604 functions as the Proton acceptor in the catalytic mechanism.

The protein belongs to the protein kinase superfamily. CAMK Ser/Thr protein kinase family. CaMK subfamily. As to quaternary structure, interacts with tac-1. As to expression, expressed in AFD thermosensory neurons. Expressed in cells near the nerve ring, in motor neurons in the ventral nerve cord and in the six touch receptor neurons including ALML/R, PLML/R and AVM and PVM. Expressed in hypodermal and neural tissues and in the germline.

The protein resides in the cytoplasm. The protein localises to the cytoskeleton. It localises to the microtubule organizing center. It is found in the centrosome. Its subcellular location is the spindle. It catalyses the reaction L-seryl-[protein] + ATP = O-phospho-L-seryl-[protein] + ADP + H(+). The catalysed reaction is L-threonyl-[protein] + ATP = O-phospho-L-threonyl-[protein] + ADP + H(+). In terms of biological role, probable kinase. Kinase activity may be involved in positioning of spindle poles in meiosis and mitosis. Plays a role in spindle positioning during asymmetric division of one-cell stage embryos. Affects spindle position by promoting microtubule assembly during anaphase. Plays a role in the assembly and stability of oocyte spindle, perhaps balancing the forces in the spindle and maintaining their morphology during metaphase. Plays a role in cell division and in embryonic viability up until gastrulation. Required for neuronal morphology and polarity and restricting ectopic process outgrowth; probably as a result of a role in maintaining microtubule integrity. Involved in maintaining neuronal microtubule number, length and packing. May promote axonal and synaptic growth. Plays a role in regulating thermotaxis responses in AFD thermosensory neurons. Required for touch sensitivity in adult touch response receptor neurons. This Caenorhabditis elegans protein is Serine/threonine-protein kinase zyg-8.